The sequence spans 87 residues: MARVTVEDCLEHVDNRFELVMLSTKRARQLATGGKEPRVAWENDKPTVVALREIAEGIVTNEFIAAEEIVTEDPVFAAFEDESNEAV.

Belongs to the RNA polymerase subunit omega family. In terms of assembly, the RNAP catalytic core consists of 2 alpha, 1 beta, 1 beta' and 1 omega subunit. When a sigma factor is associated with the core the holoenzyme is formed, which can initiate transcription.

The catalysed reaction is RNA(n) + a ribonucleoside 5'-triphosphate = RNA(n+1) + diphosphate. Its function is as follows. Promotes RNA polymerase assembly. Latches the N- and C-terminal regions of the beta' subunit thereby facilitating its interaction with the beta and alpha subunits. This chain is DNA-directed RNA polymerase subunit omega, found in Pseudomonas putida (strain W619).